The chain runs to 105 residues: Acylphosphatase (105 aa).

The Acylphosphatase-like domain maps to Arg-16–Ala-105. Active-site residues include Arg-31 and Asn-49.

This sequence belongs to the acylphosphatase family.

It catalyses the reaction an acyl phosphate + H2O = a carboxylate + phosphate + H(+). The protein is Acylphosphatase (acyP) of Acidothermus cellulolyticus (strain ATCC 43068 / DSM 8971 / 11B).